We begin with the raw amino-acid sequence, 240 residues long: Tetrahydromethanopterin S-methyltransferase subunit A (240 aa).

Residues 1–218 are Cytoplasmic-facing; it reads MAEKREPAAG…KFHAGVHAGK (218 aa). His-85 contributes to the 5-hydroxybenzimidazolylcob(I)amide binding site. A helical membrane pass occupies residues 219–239; that stretch reads FEGIMIGLAITLSLLGLILFG. Residue Arg-240 is a topological domain, extracellular.

Belongs to the MtrA family. As to quaternary structure, the complex is composed of 8 subunits; MtrA, MtrB, MtrC, MtrD, MtrE, MtrF, MtrG and MtrH. 5-hydroxybenzimidazolylcob(I)amide is required as a cofactor.

It localises to the cell membrane. The enzyme catalyses 5-methyl-5,6,7,8-tetrahydromethanopterin + coenzyme M + 2 Na(+)(in) = 5,6,7,8-tetrahydromethanopterin + methyl-coenzyme M + 2 Na(+)(out). It functions in the pathway one-carbon metabolism; methanogenesis from CO(2); methyl-coenzyme M from 5,10-methylene-5,6,7,8-tetrahydromethanopterin: step 2/2. Functionally, part of a complex that catalyzes the formation of methyl-coenzyme M and tetrahydromethanopterin from coenzyme M and methyl-tetrahydromethanopterin. This is an energy-conserving, sodium-ion translocating step. The sequence is that of Tetrahydromethanopterin S-methyltransferase subunit A from Methanohalophilus mahii (strain ATCC 35705 / DSM 5219 / SLP).